We begin with the raw amino-acid sequence, 519 residues long: Flavin-dependent halogenase rdc2 (519 aa).

The signal sequence occupies residues 1–21 (MSVPKSCTILVAGGGPAGSYA). 3 residues coordinate FAD: Gly-14, Ala-17, and Glu-47. Chloride is bound by residues Ser-324 and Gly-325.

The protein belongs to the flavin-dependent halogenase family.

The protein operates within secondary metabolite biosynthesis. Flavin-dependent halogenase; part of the gene cluster that mediates the biosynthesis of radicicol, a resorcylic acid lactone (RAL) that irreversibly inhibits the HSP90 molecular chaperone, an important target for cancer chemotherapy. Within the cluster, rdc2 is involved in the chlorination of the resorcylic acid lactone (RAL) structure to convert monocillin I into radicicol. Also chlorinates monocillin II to produce 6-cholomonocillin II and monocilllin IV to produce 13-chloromonocillin IV. In contrast to most fungal halogenases, rdc2 has a broad substrate specificity and can accept a variety of macrolactones as the substrates to generate chlorinated derivatives, including dihydroresorcylide, zearalenone, curvularin, or even curcumin. Rdc2 is able to dichlorinate dihydroresorcylide and monocillin IV. Dihydroresorcylide is first chlorinated at position 11 to produce 11-chlorodihydroresorcylide which can be further chlorinated by rdc2 at possition 13. Mororeover, rdc2 can incorporate bromine into dihydroresorcylide to yield the corresponding mono- and di-brominated derivatives. Finally, rdc2 is also able to halogenate the isoquinolines 4-hydroxyisoquinoline and 6-hydroxyisoquinoline into 3-chloro-4-hydroxyisoquinoline and 5-chloro-6-hydroxyisoquinoline, respectively. The radicicol cluster encodes only two apparent post-PKS enzymes, a cytochrome P450 monooxygenase (rdc4) and a non-heme halogenase (rdc2) that could introduce the epoxide and the chlorine, respectively. If this cluster includes all the genes required for radicicol biosynthesis, the remaining structural features of radicicol are presumably generated by the PKSs rdc1 and rdc5. The C-2' ketone could arise if the R-PKS rdc5 and NR-PKS rdc1 each carry out four iterations, in contrast to the five iteration-three iteration split for the hypothemycin PKSs. The origin of the cis 5',6' double bond is not known. The radicicol R-PKS rdc5 ER domain may catalyze either double bond isomerization or reduction in the third iteration. This is Flavin-dependent halogenase rdc2 from Metacordyceps chlamydosporia (Nematophagous fungus).